We begin with the raw amino-acid sequence, 796 residues long: ER degradation-enhancing alpha-mannosidase-like protein 1 (796 aa).

The first 20 residues, 1–20, serve as a signal peptide directing secretion; it reads MVCCLWVLLALLLHLDHVAC. Residue Asn-86 is glycosylated (N-linked (GlcNAc...) asparagine). The active-site Proton donor is the Glu-372. Thr-495 is a binding site for Ca(2+). N-linked (GlcNAc...) asparagine glycosylation is found at Asn-517, Asn-672, and Asn-762.

This sequence belongs to the glycosyl hydrolase 47 family. As to quaternary structure, interacts with PDI1. It depends on Ca(2+) as a cofactor.

The protein resides in the endoplasmic reticulum lumen. The catalysed reaction is Hydrolysis of terminal, non-reducing alpha-D-mannose residues in alpha-D-mannosides.. It functions in the pathway protein modification; protein glycosylation. In terms of biological role, alpha-1,2-specific exomannosidase involved in endoplasmic reticulum-associated degradation (ERAD). Delivers misfolded glycoproteins to proteasomes. Forms a complex with PDI1 to process unfolded protein-bound Man8GlcNAc2 oligosaccharides to Man7GlcNAc2, promoting degradation in unfolded protein response. The chain is ER degradation-enhancing alpha-mannosidase-like protein 1 (MNL1) from Saccharomyces cerevisiae (strain ATCC 204508 / S288c) (Baker's yeast).